The chain runs to 277 residues: Photosystem I assembly factor PSA3, chloroplastic (277 aa).

Residues 1-45 (MVVVTHISTSFHQISPSFFHLRLRNPSTTSSSRPKLDGGFALSIR) constitute a chloroplast transit peptide.

As to quaternary structure, interacts with PYG7.

It is found in the plastid. The protein resides in the chloroplast. It localises to the chloroplast thylakoid membrane. Its function is as follows. Nuclear genome-encoded factor required for the accumulation of photosystem I (PSI). Functions as a PSI biogenesis factor. Cooperates with PYG7 to promote the stable assembly of PSI in the thylakoid membrane. May target primarily the PsaC subunit. Does not seem to be required for the expression of chloroplast genes encoding PSI subunits. The protein is Photosystem I assembly factor PSA3, chloroplastic of Arabidopsis thaliana (Mouse-ear cress).